The sequence spans 787 residues: RNA-directed RNA polymerase 2a (787 aa).

The 115-residue stretch at 505–619 folds into the RdRp catalytic domain; sequence KCLTEIDLSK…VTDRPLEGRV (115 aa).

The protein belongs to the ssRNA positive-strand viruses RNA-directed RNA polymerase family. Interacts with replication protein 1a.

The enzyme catalyses RNA(n) + a ribonucleoside 5'-triphosphate = RNA(n+1) + diphosphate. RNA-dependent RNA polymerase which replicates the viral genome composed of 3 RNA segments, RNA1, RNA2 and RNA3. In Olive latent virus 2 (isolate Italy) (OLV-2), this protein is RNA-directed RNA polymerase 2a.